The following is a 98-amino-acid chain: Small ribosomal subunit protein eS24 (98 aa).

It belongs to the eukaryotic ribosomal protein eS24 family.

This Thermococcus gammatolerans (strain DSM 15229 / JCM 11827 / EJ3) protein is Small ribosomal subunit protein eS24.